The chain runs to 427 residues: Trigger factor (427 aa).

Residues 163–248 form the PPIase FKBP-type domain; it reads GDTVVIDFVG…IHEVKTKEVP (86 aa).

It belongs to the FKBP-type PPIase family. Tig subfamily.

It is found in the cytoplasm. The catalysed reaction is [protein]-peptidylproline (omega=180) = [protein]-peptidylproline (omega=0). In terms of biological role, involved in protein export. Acts as a chaperone by maintaining the newly synthesized protein in an open conformation. Functions as a peptidyl-prolyl cis-trans isomerase. The protein is Trigger factor of Streptococcus pyogenes serotype M18 (strain MGAS8232).